The sequence spans 417 residues: Fructose-1,6-bisphosphatase 1, chloroplastic (417 aa).

The transit peptide at 1–59 (MAATAATTTSSHLLLSSSRHVASSSQPSILSPRSLFSNNGKRAPTGVRNHQYASGVRCM) directs the protein to the chloroplast. A compositionally biased stretch (low complexity) spans 24-35 (SSQPSILSPRSL). The interval 24-48 (SSQPSILSPRSLFSNNGKRAPTGVR) is disordered. The residue at position 60 (Ala-60) is an N-acetylalanine. Glu-138, Glu-167, Asp-188, Leu-190, and Asp-191 together coordinate Mg(2+). 191–194 (DGSS) contributes to the substrate binding site. An intrachain disulfide couples Cys-233 to Cys-238. 5 residues coordinate substrate: Asn-297, Tyr-329, Tyr-347, Tyr-349, and Lys-359. Glu-365 contributes to the Mg(2+) binding site.

The protein belongs to the FBPase class 1 family. In terms of assembly, homotetramer. Mg(2+) serves as cofactor.

Its subcellular location is the plastid. The protein resides in the chloroplast stroma. The catalysed reaction is beta-D-fructose 1,6-bisphosphate + H2O = beta-D-fructose 6-phosphate + phosphate. It functions in the pathway carbohydrate biosynthesis; Calvin cycle. In terms of biological role, catalyzes the irreversible reaction from fructose-1,6-bisphosphate to fructose-6-phosphate and inorganic phosphate, to regenerate the primary CO(2) acceptor molecule, ribulose-1,5-bisphosphate. Involved in the regulation of photosynthetic electron flow and sucrose synthesis. Its activity is critical for normal plant development and important for the regulation of a wide range of metabolic processes. This Arabidopsis thaliana (Mouse-ear cress) protein is Fructose-1,6-bisphosphatase 1, chloroplastic.